Consider the following 383-residue polypeptide: NifS-like protein (383 aa).

Pyridoxal 5'-phosphate contacts are provided by residues 58 to 59 (SE) and 184 to 186 (SLN).

It belongs to the class-V pyridoxal-phosphate-dependent aminotransferase family. NifS/IscS subfamily. It depends on pyridoxal 5'-phosphate as a cofactor.

The protein resides in the virion. The polypeptide is NifS-like protein (African swine fever virus (isolate Pig/Kenya/KEN-50/1950) (ASFV)).